The following is a 399-amino-acid chain: Serine/threonine-protein kinase PknL (399 aa).

Over 1–368 (MVEAGTRDPL…FIWARQHARR (368 aa)) the chain is Cytoplasmic. In terms of domain architecture, Protein kinase spans 19-278 (YLVQAKIASG…IAMGADLEAI (260 aa)). ATP-binding positions include 25 to 33 (IASGGTSTV) and Lys-48. Asp-142 acts as the Proton acceptor in catalysis. The tract at residues 312–346 (GQLGAKPVHHPTRQLTRQPGDCSEPASGSEPEHEP) is disordered. The helical transmembrane segment at 369–389 (MVLVWVSVVLAITGLVASAAW) threads the bilayer. Residues 390-399 (TIGSNLSGLL) lie on the Extracellular side of the membrane.

This sequence belongs to the protein kinase superfamily. Ser/Thr protein kinase family. Post-translationally, autophosphorylated.

It is found in the cell membrane. The enzyme catalyses L-seryl-[protein] + ATP = O-phospho-L-seryl-[protein] + ADP + H(+). It catalyses the reaction L-threonyl-[protein] + ATP = O-phospho-L-threonyl-[protein] + ADP + H(+). This chain is Serine/threonine-protein kinase PknL (pknL), found in Mycobacterium bovis (strain ATCC BAA-935 / AF2122/97).